The chain runs to 308 residues: MILEDLLMVLSCLALHILWKVQAVPILPLSLVPDTFDDAYVGCSEEMEEKAGLLLKEEMARHALLRESWEAAQEAWAHGRHKLTLPPGFKAQHGVAVMVYTNSSNTLYWELNQAVRTGGRSRELYMRHFPFKALHFYLTRALQLLRGTGGCSREAGEVVFRGVSSLHFEPKRLGDSVRLGQFASSSVDERVARRFGNATFFNLRTCFGAPIQALSVFPEEREVLIPPHEVFLVTGFSQDGAQSIVTLWSYNQTCSHFNCAYLGGEKRRGCVSSRAGQPESFSTEALALQSGKTLLLAPGELQLSRAGP.

A signal peptide spans 1–23 (MILEDLLMVLSCLALHILWKVQA). A disulfide bond links cysteine 43 and cysteine 259. Residues 63-253 (ALLRESWEAA…IVTLWSYNQT (191 aa)) form the TR mART core domain. Tyrosine 100 is an NAD(+) binding site. Asparagine 102 carries N-linked (GlcNAc...) asparagine glycosylation. 2 residues coordinate NAD(+): arginine 161 and glutamine 181. Arginine 161 is a catalytic residue. Serine 184 is an active-site residue. Asparagine 197 carries an N-linked (GlcNAc...) asparagine glycan. Serine 215 serves as a coordination point for NAD(+). Residue glutamate 222 is part of the active site. An N-linked (GlcNAc...) asparagine glycan is attached at asparagine 251.

Belongs to the Arg-specific ADP-ribosyltransferase family.

The protein resides in the secreted. Its subcellular location is the membrane. The catalysed reaction is L-arginyl-[protein] + NAD(+) = N(omega)-(ADP-D-ribosyl)-L-arginyl-[protein] + nicotinamide + H(+). The polypeptide is Ecto-ADP-ribosyltransferase 5 (Art5) (Rattus norvegicus (Rat)).